Here is a 111-residue protein sequence, read N- to C-terminus: Large ribosomal subunit protein P1 (111 aa).

Residues 65-89 show a composition bias toward low complexity; sequence SGAGSGPAPAAAAAAPAAGGAAPAA. Residues 65 to 111 are disordered; that stretch reads SGAGSGPAPAAAAAAPAAGGAAPAAETKKKEEPKEESDDDMGFGLFD.

Belongs to the eukaryotic ribosomal protein P1/P2 family. P1 and P2 exist as dimers at the large ribosomal subunit.

In terms of biological role, plays an important role in the elongation step of protein synthesis. The protein is Large ribosomal subunit protein P1 of Caenorhabditis elegans.